The chain runs to 142 residues: Large ribosomal subunit protein uL13c (142 aa).

It belongs to the universal ribosomal protein uL13 family. Part of the 50S ribosomal subunit.

It is found in the plastid. The protein resides in the chloroplast. The protein is Large ribosomal subunit protein uL13c of Porphyra purpurea (Red seaweed).